The following is a 228-amino-acid chain: Small ribosomal subunit protein uS2 (228 aa).

Belongs to the universal ribosomal protein uS2 family.

In Buchnera aphidicola subsp. Baizongia pistaciae (strain Bp), this protein is Small ribosomal subunit protein uS2.